The chain runs to 424 residues: MSTIIDIHAREILDSRGNPTVEVDVILEDGTMGRAAVPSGASTGAYEAVERRDGDKTRYMGKGVLEACAAVNGEIADALVGLDATEQVDIDASMIELDGTANKSRLGANAILGVSLAAAKAAADYCTQPLYRYVGGTSARVLPVPMMNIINGGEHADNPIDIQEFMIMPVAADNIRDAVRMGSEVFHTLKKELSAAGLSTGIGDEGGFAPNINSTRDALDFILKSIEKAGYKPGEEIYLALDCAATEYFKNGKYELSGEGKSLTSEENVAYLAALVADYPIISIEDAMSEDDWDGWKALTDALGHKVQLVGDDLFVTNPERLATGIERGSANSMLVKVNQIGTLTETLKAVDMAHRAGFTNVMSHRSGETEDATIADLAVATNCGQIKTGSLARSDRLAKYNQLIRIEEALGETAEYAGRSILR.

Q163 contributes to the (2R)-2-phosphoglycerate binding site. E205 serves as the catalytic Proton donor. Residues D242, E285, and D312 each contribute to the Mg(2+) site. Positions 337, 366, 367, and 388 each coordinate (2R)-2-phosphoglycerate. Residue K337 is the Proton acceptor of the active site.

Belongs to the enolase family. Mg(2+) is required as a cofactor.

Its subcellular location is the cytoplasm. It is found in the secreted. The protein localises to the cell surface. It catalyses the reaction (2R)-2-phosphoglycerate = phosphoenolpyruvate + H2O. It functions in the pathway carbohydrate degradation; glycolysis; pyruvate from D-glyceraldehyde 3-phosphate: step 4/5. In terms of biological role, catalyzes the reversible conversion of 2-phosphoglycerate (2-PG) into phosphoenolpyruvate (PEP). It is essential for the degradation of carbohydrates via glycolysis. The chain is Enolase from Roseobacter denitrificans (strain ATCC 33942 / OCh 114) (Erythrobacter sp. (strain OCh 114)).